Here is a 73-residue protein sequence, read N- to C-terminus: Translation initiation factor IF-1 2 (73 aa).

The S1-like domain maps to 1 to 72 (MAKEELVEFG…TKGRINYRHK (72 aa)).

The protein belongs to the IF-1 family. Component of the 30S ribosomal translation pre-initiation complex which assembles on the 30S ribosome in the order IF-2 and IF-3, IF-1 and N-formylmethionyl-tRNA(fMet); mRNA recruitment can occur at any time during PIC assembly.

Its subcellular location is the cytoplasm. One of the essential components for the initiation of protein synthesis. Stabilizes the binding of IF-2 and IF-3 on the 30S subunit to which N-formylmethionyl-tRNA(fMet) subsequently binds. Helps modulate mRNA selection, yielding the 30S pre-initiation complex (PIC). Upon addition of the 50S ribosomal subunit IF-1, IF-2 and IF-3 are released leaving the mature 70S translation initiation complex. The sequence is that of Translation initiation factor IF-1 2 from Cupriavidus pinatubonensis (strain JMP 134 / LMG 1197) (Cupriavidus necator (strain JMP 134)).